The primary structure comprises 752 residues: Iron-sulfur clusters transporter ABCB7, mitochondrial (752 aa).

The N-terminal 22 residues, 1-22 (MALLAMHSWRWAAAAAAFEKRR), are a transit peptide targeting the mitochondrion. Residues 23 to 140 (HSAILIRPLV…KDRPDLRARV (118 aa)) lie on the Mitochondrial matrix side of the membrane. Residues 140 to 436 (VAISLGFLGG…LGTVYRETRQ (297 aa)) enclose the ABC transmembrane type-1 domain. A helical transmembrane segment spans residues 141-161 (AISLGFLGGAKAMNIVVPFMF). Over 162 to 185 (KYAVDSLNQMSGNMLNLSDAPNTV) the chain is Mitochondrial intermembrane. The chain crosses the membrane as a helical span at residues 186–206 (ATMATAVLIGYGVSRAGAAFF). The Mitochondrial matrix portion of the chain corresponds to 207-259 (NEVRNAVFGKVAQNSIRRIAKNVFLHLHNLDLGFHLSRQTGALSKAIDRGTRG). An N6-acetyllysine mark is found at lysine 216 and lysine 251. A helical membrane pass occupies residues 260-280 (ISFVLSALVFNLLPIMFEVML). Over 281–290 (VSGVLYYKCG) the chain is Mitochondrial intermembrane. Residues 291–311 (AQFALVTLGTLGTYTAFTVAV) traverse the membrane as a helical segment. The Mitochondrial matrix segment spans residues 312–382 (TRWRTRFRIE…TLAMLNFGQS (71 aa)). 315–319 (RTRFR) contacts glutathione. Serine 336 carries the phosphoserine modification. A Phosphotyrosine modification is found at tyrosine 340. The residue at position 342 (threonine 342) is a Phosphothreonine. 378-381 (NFGQ) is a binding site for glutathione. The chain crosses the membrane as a helical span at residues 383 to 403 (AIFSVGLTAIMVLASQGIVAG). The Mitochondrial intermembrane portion of the chain corresponds to 404-409 (TLTVGD). The helical transmembrane segment at 410–430 (LVMVNGLLFQLSLPLNFLGTV) threads the bilayer. Position 428 (glycine 428) interacts with glutathione. The Mitochondrial matrix portion of the chain corresponds to 431 to 752 (YRETRQALID…SVKGCGNCSC (322 aa)). One can recognise an ABC transporter domain in the interval 472 to 706 (VAFDNVHFEY…PHSIYSEMWH (235 aa)). ATP is bound by residues tyrosine 481 and 505-516 (GGSGSGKSTIVR).

This sequence belongs to the ABC transporter superfamily. ABCB family. Heavy Metal importer (TC 3.A.1.210) subfamily. As to quaternary structure, homodimer or heterodimer. Interacts with C10orf88/PAAT. Forms a complex with ABCB10 and FECH, where a dimeric FECH bridges ABCB7 and ABCB10 homodimers; this complex may be required for cellular iron homeostasis, mitochondrial function and heme biosynthesis. Interacts with FECH. Interacts with ATP5F1A. Interacts with COX4I1; this interaction allows the regulation of cellular iron homeostasis and cellular reactive oxygen species (ROS) levels in cardiomyocytes.

It is found in the mitochondrion inner membrane. It carries out the reaction (glutathione)4[2Fe(III)-2S] cluster(in) + ATP + H2O = (glutathione)4[2Fe(III)-2S] cluster(out) + ADP + phosphate + H(+). Its activity is regulated as follows. ATPase activity is stimulated by glutathione. In terms of biological role, exports glutathione-coordinated iron-sulfur clusters such as [2Fe-2S]-(GS)4 cluster from the mitochondria to the cytosol in an ATP-dependent manner allowing the assembly of the cytosolic iron-sulfur (Fe/S) cluster-containing proteins and participates in iron homeostasis. Moreover, through a functional complex formed of ABCB7, FECH and ABCB10, also plays a role in the cellular iron homeostasis, mitochondrial function and heme biosynthesis. In cardiomyocytes, regulates cellular iron homeostasis and cellular reactive oxygen species (ROS) levels through its interaction with COX4I1. May also play a role in hematopoiesis. The protein is Iron-sulfur clusters transporter ABCB7, mitochondrial of Homo sapiens (Human).